Reading from the N-terminus, the 208-residue chain is EF-hand protein 5 variant 1 (208 aa).

A disordered region spans residues 1–34 (MQARGTVKVQGDAKVDGKMSTGQHSHHQHLNSTQ). 4 consecutive EF-hand domains span residues 64 to 98 (MAEGFYVLSGGYKKLFIPSKDVYALMQNVGMHLTE), 99 to 134 (EEFHDALRVIGQSEPQNADELSFSDFLLLMTREVDD), 135 to 170 (TMADELRSAFFHYDKYKTGYVTRKQFTELFATLGER), and 171 to 206 (STPEELEELLAVAEVDETDDKIDYNRFVNELTSRVN). Ca(2+) is bound by residues E118, D123, D148, T152, and Y154.

This is EF-hand protein 5 variant 1 from Trypanosoma cruzi.